The chain runs to 572 residues: MRTSQYLLSTQKETPADAEVISHQLMLRAGMIRKLASGLYTWLPTGVRVLKKVENIVREEMNNAGAIEVSMPVVQPADLWQESGRWEQYGPELLRFVDRGERPFVLGPTHEEVITDLIRGEINSYKQLPLNFFQIQTKFRDELRPRFGVMRAREFLMKDAYSFHTTQESLQETYDAMYTAYSKIFSRMDLNFRAVLADTGSIGGSASHEFQVLAESGEDDIVFSTGSDYAANIEFAEALAPTEPRAPATEELRIVDTPNAKTIAELVEQFKLPIEKTVKTLLVHAHEESGHKLVALLVRGDHDLNEIKAEKLPQVAKPLTFASEEEIRAAIGAGPGSLGPVNLSLPVIADRSVAVMSDFGAGANIDGKHYFGINWERDLALPLVADLRNVVEGDISPDGKGTLQIKRGIEVGHIFQLGTKYSEAMKATVQGEDGRNQVMTMGCYGIGVSRVVAAAIEQNHDDRGIIWPDAIAPFQVAILPMNMHKSFRVKELAEELYTTLRSHGIDVILDDRKERPGVMFADMELIGVPHNIVIGDRNLDSEEVEYKNRRVGEKQMIKTSEIVEFLLSQIKR.

The protein belongs to the class-II aminoacyl-tRNA synthetase family. ProS type 1 subfamily. In terms of assembly, homodimer.

The protein localises to the cytoplasm. The catalysed reaction is tRNA(Pro) + L-proline + ATP = L-prolyl-tRNA(Pro) + AMP + diphosphate. Its function is as follows. Catalyzes the attachment of proline to tRNA(Pro) in a two-step reaction: proline is first activated by ATP to form Pro-AMP and then transferred to the acceptor end of tRNA(Pro). As ProRS can inadvertently accommodate and process non-cognate amino acids such as alanine and cysteine, to avoid such errors it has two additional distinct editing activities against alanine. One activity is designated as 'pretransfer' editing and involves the tRNA(Pro)-independent hydrolysis of activated Ala-AMP. The other activity is designated 'posttransfer' editing and involves deacylation of mischarged Ala-tRNA(Pro). The misacylated Cys-tRNA(Pro) is not edited by ProRS. The chain is Proline--tRNA ligase from Yersinia pseudotuberculosis serotype IB (strain PB1/+).